Here is a 336-residue protein sequence, read N- to C-terminus: Dihydroorotate dehydrogenase (quinone) (336 aa).

FMN-binding positions include 62–66 (AGLDK) and T86. Residue K66 participates in substrate binding. 111–115 (NRMGF) is a substrate binding site. Residues N139 and N172 each contribute to the FMN site. N172 provides a ligand contact to substrate. S175 serves as the catalytic Nucleophile. Substrate is bound at residue N177. The FMN site is built by K217 and T245. 246 to 247 (NT) contributes to the substrate binding site. Residues G268, G297, and 318-319 (YS) contribute to the FMN site.

This sequence belongs to the dihydroorotate dehydrogenase family. Type 2 subfamily. As to quaternary structure, monomer. FMN is required as a cofactor.

The protein resides in the cell membrane. The catalysed reaction is (S)-dihydroorotate + a quinone = orotate + a quinol. It functions in the pathway pyrimidine metabolism; UMP biosynthesis via de novo pathway; orotate from (S)-dihydroorotate (quinone route): step 1/1. Catalyzes the conversion of dihydroorotate to orotate with quinone as electron acceptor. In Klebsiella pneumoniae (strain 342), this protein is Dihydroorotate dehydrogenase (quinone).